Consider the following 300-residue polypeptide: SNAP25 homologous protein SNAP33 (300 aa).

Disordered stretches follow at residues 1–76 (MFGL…QSLF) and 176–228 (WKPK…PESA). Ser-29 carries the post-translational modification Phosphoserine. Positions 38–49 (TLNPSKRTTSEP) are enriched in polar residues. A compositionally biased stretch (basic and acidic residues) spans 190–208 (TRDDSPTRRVNHLEKREKL). A t-SNARE coiled-coil homology domain is found at 235-297 (EMEKAKQDDG…QQSNQRGRRL (63 aa)).

This sequence belongs to the SNAP-25 family. As to quaternary structure, interacts with the cytokinesis-specific syntaxin KNOLLE and with SYP121. Binds to EXO70B2. As to expression, ubiquitous, with a strong expression in root tips, ovules, very young leaves, vascular tissue, hydathodes, stipules and the abscission and dehiscence zones of the siliques.

The protein resides in the membrane. In terms of biological role, t-SNARE involved in diverse vesicle trafficking and membrane fusion processes, including cell plate formation. May function in the secretory pathway. This is SNAP25 homologous protein SNAP33 from Arabidopsis thaliana (Mouse-ear cress).